We begin with the raw amino-acid sequence, 247 residues long: Cell division protein ZapD (247 aa).

Belongs to the ZapD family. In terms of assembly, interacts with FtsZ.

The protein resides in the cytoplasm. In terms of biological role, cell division factor that enhances FtsZ-ring assembly. Directly interacts with FtsZ and promotes bundling of FtsZ protofilaments, with a reduction in FtsZ GTPase activity. This Salmonella dublin (strain CT_02021853) protein is Cell division protein ZapD.